Reading from the N-terminus, the 5405-residue chain is IgGFc-binding protein (5405 aa).

The first 23 residues, 1 to 23, serve as a signal peptide directing secretion; sequence MGALWSWWILWAGATLLWGLTQE. Residues 24 to 450 are igGFc-binding; sequence ASVDLKNTGR…EPSCEGMQCA (427 aa). N-linked (GlcNAc...) asparagine glycans are attached at residues Asn75 and Asn91. In terms of domain architecture, VWFD 1 spans 470-650; it reads AVCRAQGDPH…KLDDGDYLCE (181 aa). 2 disulfide bridges follow: Cys472–Cys611 and Cys494–Cys649. Positions 745–799 constitute a TIL 1 domain; sequence CPANSRYELCGPACPTSCNGAAAPSNCSGRPCVEGCVCLPGFVASGGACVPASSC. In terms of domain architecture, VWFD 2 spans 862–1041; the sequence is GTCQGSGDPH…WQEETRPGCG (180 aa). Disulfide bonds link Cys864–Cys1003 and Cys886–Cys1040. One can recognise a TIL 2 domain in the interval 1136 to 1189; it reads CPPHSHYEACSYGCPLSCGDLPVPGGCGSECHEGCVCDEGFALSGESCLPLASC. Residues 1250 to 1429 enclose the VWFD 3 domain; sequence STCQASGDPH…EEVVPDSPCL (180 aa). 2 disulfides stabilise this stretch: Cys1252/Cys1390 and Cys1274/Cys1428. Asn1317 carries an N-linked (GlcNAc...) (complex) asparagine glycan. In terms of domain architecture, TIL 3 spans 1532-1585; sequence CPPNSHYELCADTCSLGCSALSAPPQCQDGCAEGCQCDSGFLYNGQACVPIQQC. In terms of domain architecture, VWFD 4 spans 1671 to 1854; the sequence is ATCWLWGDPH…RAPGWDPLCW (184 aa). Cystine bridges form between Cys1673–Cys1815, Cys1695–Cys1853, and Cys1704–Cys1812. N-linked (GlcNAc...) asparagine glycosylation is present at Asn1743. Residues 1950 to 2007 enclose the TIL 4 domain; it reads CPENSHYEVCGSPCPASCPSPAPLTTPAVCEGPCVEGCQCDAGFVLSADRCVPLNNGC. Residues 2070–2253 form the VWFD 5 domain; it reads AECQAWGDPH…VSKPCPSPCT (184 aa). Disulfide bonds link Cys2072/Cys2211 and Cys2094/Cys2252. Asn2138 carries N-linked (GlcNAc...) asparagine glycosylation. Positions 2337–2390 constitute a TIL 5 domain; it reads CPAHSHYELCGDSCPGSCPSLSAPEGCESACREGCVCDAGFVLSGDTCVPVGQC. A VWFD 6 domain is found at 2451 to 2630; it reads TTCQASGDPH…EEVVPDSPCL (180 aa). Intrachain disulfides connect Cys2453–Cys2591 and Cys2475–Cys2629. The N-linked (GlcNAc...) asparagine glycan is linked to Asn2518. The region spanning 2733-2786 is the TIL 6 domain; it reads CPQNSHYELCADTCSLGCSALSAPLQCPDGCAEGCQCDSGFLYNGQACVPIQQC. Residues 2872 to 3055 enclose the VWFD 7 domain; it reads ATCWLWGDPH…RAPGWDPLCW (184 aa). 3 disulfides stabilise this stretch: Cys2874/Cys3016, Cys2896/Cys3054, and Cys2905/Cys3013. One can recognise a TIL 7 domain in the interval 3151–3208; that stretch reads CPENSHYEVCGPPCPASCPSPAPLTTPAVCEGPCVEGCQCDAGFVLSADRCVPLNNGC. The VWFD 8 domain maps to 3271-3454; the sequence is AECQAWGDPH…VSKPCPSPCT (184 aa). Cystine bridges form between Cys3273–Cys3412 and Cys3295–Cys3453. One can recognise a TIL 8 domain in the interval 3538–3591; that stretch reads CPAHSHYELCGDSCPGSCPSLSAPEGCESACREGCVCDAGFVLSGDTCVPVGQC. The VWFD 9 domain maps to 3652 to 3831; sequence TTCQASGDPH…EEVVPDSPCL (180 aa). Intrachain disulfides connect Cys3654/Cys3792 and Cys3676/Cys3830. An N-linked (GlcNAc...) asparagine glycan is attached at Asn3719. Residues 3934–3987 form the TIL 9 domain; it reads CPQNSHYELCADTCSLGCSALSAPLQCPDGCAEGCQCDSGFLYNGQACVPIQQC. Positions 4073–4256 constitute a VWFD 10 domain; sequence ATCWLWGDPH…RAPGWDPLCW (184 aa). 3 cysteine pairs are disulfide-bonded: Cys4075–Cys4217, Cys4097–Cys4255, and Cys4106–Cys4214. The N-linked (GlcNAc...) asparagine glycan is linked to Asn4145. One can recognise a TIL 10 domain in the interval 4352-4409; that stretch reads CPENSHYEVCGPPCPASCPSPAPLTTPAVCEGPCVEGCQCDAGFVLSADRCVPLNNGC. The VWFD 11 domain occupies 4472 to 4655; the sequence is AECQAWGDPH…VSKPCPSPCT (184 aa). 2 cysteine pairs are disulfide-bonded: Cys4474–Cys4613 and Cys4496–Cys4654. Asn4540 carries N-linked (GlcNAc...) asparagine glycosylation. The region spanning 4739-4792 is the TIL 11 domain; it reads CPAHSHYELCGDSCPVSCPSLSAPEGCESACREGCVCDAGFVLSGDTCVPVGQC. Positions 4854-5025 constitute a VWFD 12 domain; it reads GRCLANGGIH…RAPGSSKGCG (172 aa). Disulfide bonds link Cys4856–Cys4986 and Cys4878–Cys5024. Positions 5121 to 5174 constitute a TIL 12 domain; that stretch reads CPAHSHYSICTRTCQGSCAALSGLTGCTTRCFEGCECDDRFLLSQGVCIPVQDC. The 172-residue stretch at 5233 to 5404 folds into the VWFD 13 domain; sequence GLCVLSVGAN…WRAQDFSPCY (172 aa). A disulfide bond links Cys5235 and Cys5372.

As to quaternary structure, interacts with the Fc portion of IgG and with MUC2. As to expression, mainly expressed in placenta and colon epithelium. Expressed in thyroid, and down-regulated in thyroid carcinomas. Present in serum, with higher levels in patients with various autoimmune diseases (at protein level).

It localises to the secreted. Functionally, may be involved in the maintenance of the mucosal structure as a gel-like component of the mucosa. This chain is IgGFc-binding protein (FCGBP), found in Homo sapiens (Human).